Reading from the N-terminus, the 333-residue chain is Glycerol-3-phosphate dehydrogenase [NAD(P)+] (333 aa).

NADPH-binding residues include Tyr14, His34, and Lys108. 3 residues coordinate sn-glycerol 3-phosphate: Lys108, Gly137, and Thr139. Ala141 is an NADPH binding site. Sn-glycerol 3-phosphate is bound by residues Lys193, Asp247, Ser257, Arg258, and Asn259. Lys193 serves as the catalytic Proton acceptor. Arg258 contacts NADPH. Residues Leu282 and Glu284 each contribute to the NADPH site.

Belongs to the NAD-dependent glycerol-3-phosphate dehydrogenase family.

It is found in the cytoplasm. It catalyses the reaction sn-glycerol 3-phosphate + NAD(+) = dihydroxyacetone phosphate + NADH + H(+). The enzyme catalyses sn-glycerol 3-phosphate + NADP(+) = dihydroxyacetone phosphate + NADPH + H(+). It functions in the pathway membrane lipid metabolism; glycerophospholipid metabolism. In terms of biological role, catalyzes the reduction of the glycolytic intermediate dihydroxyacetone phosphate (DHAP) to sn-glycerol 3-phosphate (G3P), the key precursor for phospholipid synthesis. The chain is Glycerol-3-phosphate dehydrogenase [NAD(P)+] from Blochmanniella floridana.